Here is a 59-residue protein sequence, read N- to C-terminus: Protein NapE (59 aa).

Over 1–18 the chain is Cytoplasmic; it reads MIDSAKETDRPKHRKRDE. Residues 19-43 traverse the membrane as a helical segment; sequence VIAFLILAVVIWPILSVAIVGGYGF. The Periplasmic segment spans residues 44-59; that stretch reads LVWMSQIIFGPPGPMH.

It localises to the cell inner membrane. Functionally, may be involved in mediating interactions between NapC and a quinol oxidase. This chain is Protein NapE (napE), found in Paracoccus pantotrophus (Thiosphaera pantotropha).